The primary structure comprises 506 residues: Anaerobic nitric oxide reductase transcription regulator NorR (506 aa).

Aspartate 57 is subject to 4-aspartylphosphate. Residues 187-416 (MIGLSPAMTQ…LEHAIHRAVV (230 aa)) form the Sigma-54 factor interaction domain. ATP contacts are provided by residues 215 to 222 (GETGTGKE) and 278 to 287 (ADNGTLFLDE). A DNA-binding region (H-T-H motif) is located at residues 481–500 (WAASARALETDVANLHRLAK).

It functions in the pathway nitrogen metabolism; nitric oxide reduction. In terms of biological role, required for the expression of anaerobic nitric oxide (NO) reductase, acts as a transcriptional activator for at least the norVW operon. Activation also requires sigma-54. In Salmonella heidelberg (strain SL476), this protein is Anaerobic nitric oxide reductase transcription regulator NorR.